Here is a 575-residue protein sequence, read N- to C-terminus: MSSDEEKYSLPVVQNDSSRGSSVSSNLQEEYEELLHYAIVTPNIEPCASQSSHPKGELVPDVRISTIHDILHSQGNNSEVRETAIEVGKGCDFHISSHSKTDESSPVLSPRKPSHPVMDFFSSHLLADSSSPATNSSHTDAHEILVSDFLVSDENLQKMENVLDLWSSGLKTNIISELSKWRLNFIDWHRMEMRKEKEKHAAHLKQLCNQINELKELQKTFEISIGRKDEVISSLSHAIGKQKEKIELMRTFFHWRIGHVRARQDVYEGKLADQYYQRTLLKKVWKVWRSVVQKQWKDVVERACQARAEEVCIQISNDYEAKVAMLSGALENAKAEIQRMQHEKEHFEDSMKKAFMRGVCALNLEAMTIFQNRNDAGIDSTNNKKEEYGPGVQGKEHSAHLDPSAPPMPLPVTSPLLPSPPAAVGGASATAVPSAASMTSTRAASASSVHVPVSALGAGSAATAASEEMYVPRVVTSAQQKAGRTITARITGRCDFASKNRISSSLAIMGVSPPMSSVVVEKHHPVTVQTIPQATAAKYPRTIHPESSTSASRSLGTRSAHTQSLTSVHSIKVVD.

The tract at residues 1-26 (MSSDEEKYSLPVVQNDSSRGSSVSSN) is disordered. A phosphoserine mark is found at Ser-105 and Ser-109. The Centrin-binding (CBR) 1 repeat unit spans residues 142–173 (HEILVSDFLVSDENLQKMENVLDLWSSGLKTN). Residues 191–222 (MEMRKEKEKHAAHLKQLCNQINELKELQKTFE) adopt a coiled-coil conformation. Centrin-binding (CBR) repeat units follow at residues 231-262 (VISS…HVRA) and 263-295 (RQDV…VQKQ). The stretch at 316 to 355 (SNDYEAKVAMLSGALENAKAEIQRMQHEKEHFEDSMKKAF) forms a coiled coil. Disordered regions lie at residues 376-411 (AGID…MPLP) and 538-575 (KYPR…KVVD). A compositionally biased stretch (basic and acidic residues) spans 382–400 (NNKKEEYGPGVQGKEHSAH). Lys-538 is modified (N6-acetyllysine). Residues 545 to 569 (PESSTSASRSLGTRSAHTQSLTSVH) show a composition bias toward polar residues. Ser-564 carries the post-translational modification Phosphoserine.

It belongs to the POC5 family. As to quaternary structure, interacts with CETN2 and CETN3. Forms a microtubule-associated complex with POC1B, CETN2 and FAM161A. Interacts with CCDC15. Post-translationally, hyperphosphorylated during recruitment to procentrioles in G2/M phase.

It is found in the cytoplasm. The protein localises to the cytoskeleton. It localises to the microtubule organizing center. The protein resides in the centrosome. Its subcellular location is the centriole. Essential for the assembly of the distal half of centrioles, required for centriole elongation. Acts as a negative regulator of centriole elongation. The polypeptide is Centrosomal protein POC5 (POC5) (Homo sapiens (Human)).